The primary structure comprises 537 residues: Cytochrome bd ubiquinol oxidase subunit 1 (537 aa).

At 1–24 (MISESVVDLSRLQFAMTALYHFLF) the chain is on the cytoplasmic side. Position 21 (histidine 21) interacts with heme b. A helical membrane pass occupies residues 25-44 (VPLTLGMTFLLAIMESVYVM). Residues 45-96 (TGKQVYKDMVKFWGKLFGINFALGVTTGITMEFQFGTNWAYYSHYVGDIFGA) lie on the Periplasmic side of the membrane. A helical transmembrane segment spans residues 97-116 (PLAIEGLTAFFLESTFIGMF). The Cytoplasmic portion of the chain corresponds to 117-131 (FFGWDRLSKIQHLAV). A helical membrane pass occupies residues 132–151 (TWLVALGSNLSALWILVANG). Topologically, residues 152–189 (WMQHPVGAEFNFETMRMELVDFGALLLNPVAQVKFVHT) are periplasmic. Histidine 188 lines the heme b pocket. Residues 190–209 (VASGYVTGAVFVLAISSYYL) form a helical membrane-spanning segment. The Cytoplasmic segment spans residues 210-221 (LKKRDLGFARRS). A helical transmembrane segment spans residues 222-241 (FAIASAFGMASILSVIVLGD). Over 242–394 (ESGYEVGEVQ…VASMFWSFRA (153 aa)) the chain is Periplasmic. Heme b is bound at residue methionine 395. The helical transmembrane segment at 395 to 414 (MVGAGFAMLILFVCAFWASA) threads the bilayer. At 415-472 (RKNEESKPWLLKFALYSLPLPWIATQTGWFVAEHGRQPWTIGGVLPTHLSASSLSTGD) the chain is on the cytoplasmic side. A helical membrane pass occupies residues 473-492 (LWGSLIALIAFYTLLLVVEM). Residues 493–537 (YLMIRFARLGPSSLHTGRYHFEQLEQHAVKHASPSQADPQQPVNA) are Periplasmic-facing.

It belongs to the cytochrome ubiquinol oxidase subunit 1 family. Heterodimer of subunits I and II. Heme b serves as cofactor. The cofactor is heme d cis-diol.

It localises to the cell inner membrane. The enzyme catalyses 2 a ubiquinol + O2(in) + 4 H(+)(in) = 2 a ubiquinone + 2 H2O(in) + 4 H(+)(out). Its function is as follows. May be involved in maintaining the low intracellular oxygen concentration required for nitrogen fixation. This is Cytochrome bd ubiquinol oxidase subunit 1 (cydA) from Azotobacter vinelandii.